A 1150-amino-acid chain; its full sequence is Solute carrier family 12 member 6 (1150 aa).

The disordered stretch occupies residues 1–108; that stretch reads MHPPEATTKM…GEHSQLLDDG (108 aa). The Cytoplasmic portion of the chain corresponds to 1 to 135; the sequence is MHPPEATTKM…DEYFDKNLAL (135 aa). Over residues 28–45 the composition is skewed to low complexity; the sequence is LSDTSPDLSSRSSSRVRF. The residue at position 32 (Ser32) is a Phosphoserine. Residues 80 to 101 show a composition bias toward polar residues; that stretch reads DRTSNPQDVTEDPSQNSITGEH. A Phosphoserine modification is found at Ser120. Residues 136–158 traverse the membrane as a discontinuously helical segment; the sequence is FEEEMDTRPKVSSLLNRMANYTN. The K(+) site is built by Ser147 and Ser148. Residue Ser148 is modified to Phosphoserine. A chloride-binding site is contributed by Asn151. Topologically, residues 159–165 are extracellular; sequence LTQGAKE. Residues 161–181 form a disordered region; it reads QGAKEHEEAENITEGKKKPTK. Positions 163–177 are enriched in basic and acidic residues; it reads AKEHEEAENITEGKK. Residues 166–188 form a helical membrane-spanning segment; that stretch reads HEEAENITEGKKKPTKSPQMGTF. Residues 189-211 are Cytoplasmic-facing; sequence MGVYLPCLQNIFGVILFLRLTWV. A helical membrane pass occupies residues 212-245; it reads VGTAGILQAFAIVLICCCCTMLTAISMSAIATNG. The Extracellular segment spans residues 246 to 263; that stretch reads VVPAGGSYFMISRALGPE. 2 helical membrane passes run 264-287 and 288-316; these read FGGAVGLCFYLGTTFAAAMYILGA and IEIFLVYIVPRAAIFRSDDALKESAAMLN. A K(+)-binding site is contributed by Tyr283. Residues 317–433 lie on the Extracellular side of the membrane; that stretch reads NMRVYGTAFL…FVHNNVISIQ (117 aa). Cys375 and Cys390 form a disulfide bridge. Asn379, Asn398, Asn411, and Asn417 each carry an N-linked (GlcNAc...) asparagine glycan. A disulfide bridge connects residues Cys410 and Cys420. A helical membrane pass occupies residues 434 to 454; the sequence is GIPGLASGIITENLWSNYLPK. Residues Ile443, Thr444, and Asn446 each contribute to the K(+) site. Residues Ile443 and Thr444 each coordinate chloride. Chloride contacts are provided by Leu447 and Trp448. Residues 455–464 are Cytoplasmic-facing; it reads GEIIEKPSAK. The helical transmembrane segment at 465-487 threads the bilayer; that stretch reads SSDVLGNLNHEYVLADITTSFTL. The Extracellular segment spans residues 488–518; it reads LVGIFFPSVTGIMAGSNRSGDLKDAQKSIPI. Thr497 contributes to the K(+) binding site. A helical membrane pass occupies residues 519–545; the sequence is GTILAILTTSFVYLSNVVLFGACIEGV. The Cytoplasmic portion of the chain corresponds to 546–568; it reads VLRDKFGDAVKGNLVVGTLSWPS. Helical transmembrane passes span 569–589 and 590–612; these read PWVIVIGSFFSTCGAGLQSLT and GAPRLLQAIAKDNIIPFLRVFGH. Ile603 lines the chloride pocket. The Cytoplasmic segment spans residues 613–629; that stretch reads SKANGEPTWALLLTAAI. 2 helical membrane-spanning segments follow: residues 630–649 and 650–665; these read AELGILIASLDLVAPILSMF and FLMCYLFVNLACALQT. Residue Tyr654 participates in chloride binding. Topologically, residues 666-1150 are cytoplasmic; sequence LLRTPNWRPR…GGSEVITIYS (485 aa). The tract at residues 682–691 is scissor helix; sequence ALSFMGMSIC. Residue Ser736 is modified to Phosphoserine. Thr778 is modified (phosphothreonine). A Phosphoserine modification is found at Ser981. Thr991 carries the phosphothreonine modification. Ser1023, Ser1029, and Ser1032 each carry phosphoserine. Thr1048 is modified (phosphothreonine). The residue at position 1121 (Tyr1121) is a Phosphotyrosine.

It belongs to the SLC12A transporter family. K/Cl co-transporter subfamily. In terms of assembly, homodimer; adopts a domain-swap conformation at the scissor helices connecting the transmembrane domain and C-terminal domain. Heterodimer with K-Cl cotransporter SLC12A5. Interacts (via C-terminus) with CKB; the interaction may be required for potassium-chloride cotransport activity. Post-translationally, phosphorylated, phosphorylation regulates transporter activity. Phosphorylated at Thr-991 and Thr-1048 by OXSR1/OSR1 and STK39/SPAK downstream of WNK kinases (WNK1, WNK2, WNK3 or WNK4), inhibiting the potassium-chloride cotransport activity. In terms of processing, N-glycosylated. As to expression, expressed in hippocampus and corpus callosum (at protein level). Highly expressed throughout the brain and detected at lower levels in kidney. Highly expressed in highly myelinated white matter of the brain, but not in gray matter. Detected in the corpus callosum, in packed cell layers of the hippocampus and in Purkinje neurons within the cerebellum. Highly expressed in white matter in the spinal cord, but not in dorsal root ganglia or sciatic nerve. Colocalizes with the oligodendrocyte marker CNP. Expressed in hippocampus in CA1, and to a lesser extent CA3 pyramidal cells. Also expressed in cortex, mostly in large neurons and in the large cerebellar Purkinje cells. In terms of tissue distribution, highly expressed in kidney, but not detected in brain.

It is found in the cell membrane. Its subcellular location is the basolateral cell membrane. The catalysed reaction is K(+)(in) + chloride(in) = K(+)(out) + chloride(out). Its activity is regulated as follows. Inhibited following phosphorylation by OXSR1/OSR1 and STK39/SPAK: phosphorylation takes place downstream of WNK kinases (WNK1, WNK2, WNK3 or WNK4) in response to hyperosmotic stress and subsequent cell shrinkage. Its function is as follows. Mediates electroneutral potassium-chloride cotransport when activated by cell swelling. May contribute to cell volume homeostasis in single cells. In terms of biological role, mediates electroneutral potassium-chloride cotransport when activated by cell swelling. May contribute to cell volume homeostasis in single cells. This Mus musculus (Mouse) protein is Solute carrier family 12 member 6 (Slc12a6).